Consider the following 290-residue polypeptide: Ribosomal RNA small subunit methyltransferase A (290 aa).

Residues asparagine 27, leucine 29, glycine 54, glutamate 75, aspartate 100, and asparagine 125 each contribute to the S-adenosyl-L-methionine site.

The protein belongs to the class I-like SAM-binding methyltransferase superfamily. rRNA adenine N(6)-methyltransferase family. RsmA subfamily.

Its subcellular location is the cytoplasm. The catalysed reaction is adenosine(1518)/adenosine(1519) in 16S rRNA + 4 S-adenosyl-L-methionine = N(6)-dimethyladenosine(1518)/N(6)-dimethyladenosine(1519) in 16S rRNA + 4 S-adenosyl-L-homocysteine + 4 H(+). Functionally, specifically dimethylates two adjacent adenosines (A1518 and A1519) in the loop of a conserved hairpin near the 3'-end of 16S rRNA in the 30S particle. May play a critical role in biogenesis of 30S subunits. In Streptococcus pneumoniae (strain Hungary19A-6), this protein is Ribosomal RNA small subunit methyltransferase A.